A 121-amino-acid polypeptide reads, in one-letter code: U15-barytoxin-Tl1a (121 aa).

Positions M1–A17 are cleaved as a signal peptide. Disulfide bonds link C56-C74, C67-C80, C71-C119, and C73-C90.

The protein belongs to the neurotoxin 03 (Tx2) family. 03 subfamily. Expressed by the venom gland.

Its subcellular location is the secreted. In terms of biological role, ion channel inhibitor. This chain is U15-barytoxin-Tl1a, found in Trittame loki (Brush-footed trapdoor spider).